A 63-amino-acid polypeptide reads, in one-letter code: Large ribosomal subunit protein uL29 (63 aa).

The protein belongs to the universal ribosomal protein uL29 family.

This chain is Large ribosomal subunit protein uL29, found in Ectopseudomonas mendocina (strain ymp) (Pseudomonas mendocina).